We begin with the raw amino-acid sequence, 293 residues long: Ribosomal protein L11 methyltransferase (293 aa).

S-adenosyl-L-methionine-binding residues include T145, G166, D188, and N230.

The protein belongs to the methyltransferase superfamily. PrmA family.

It is found in the cytoplasm. The enzyme catalyses L-lysyl-[protein] + 3 S-adenosyl-L-methionine = N(6),N(6),N(6)-trimethyl-L-lysyl-[protein] + 3 S-adenosyl-L-homocysteine + 3 H(+). In terms of biological role, methylates ribosomal protein L11. The chain is Ribosomal protein L11 methyltransferase from Escherichia coli O139:H28 (strain E24377A / ETEC).